The sequence spans 428 residues: Putative zinc metalloprotease SAR1238 (428 aa).

His21 is a Zn(2+) binding site. Glu22 is an active-site residue. His25 contributes to the Zn(2+) binding site. Helical transmembrane passes span 172-194, 309-331, 352-374, and 401-420; these read FLTL…IGLA, GSTY…GFSF, IISL…LIPI, and TTII…LVTW. Residues 186 to 269 enclose the PDZ domain; it reads ALVLFIGLAY…TKSVELTPKK (84 aa).

The protein belongs to the peptidase M50B family. Zn(2+) serves as cofactor.

It localises to the cell membrane. This Staphylococcus aureus (strain MRSA252) protein is Putative zinc metalloprotease SAR1238.